The sequence spans 202 residues: FMN-dependent NADH:quinone oxidoreductase (202 aa).

Residues S9, 15-17, and 94-97 contribute to the FMN site; these read SAS and MYNL.

Belongs to the azoreductase type 1 family. Homodimer. FMN is required as a cofactor.

The enzyme catalyses 2 a quinone + NADH + H(+) = 2 a 1,4-benzosemiquinone + NAD(+). The catalysed reaction is N,N-dimethyl-1,4-phenylenediamine + anthranilate + 2 NAD(+) = 2-(4-dimethylaminophenyl)diazenylbenzoate + 2 NADH + 2 H(+). In terms of biological role, quinone reductase that provides resistance to thiol-specific stress caused by electrophilic quinones. Also exhibits azoreductase activity. Catalyzes the reductive cleavage of the azo bond in aromatic azo compounds to the corresponding amines. The polypeptide is FMN-dependent NADH:quinone oxidoreductase (Gluconobacter oxydans (strain 621H) (Gluconobacter suboxydans)).